The following is a 181-amino-acid chain: Epidermin decarboxylase (181 aa).

Histidine 67 is a catalytic residue.

Belongs to the HFCD (homooligomeric flavin containing Cys decarboxylase) superfamily. Homododecamer. Requires FMN as cofactor.

Its function is as follows. Catalyzes the removal of two reducing equivalents (oxidative decarboxylation) from the cysteine residue of the C-terminal meso-lanthionine of epidermin to form a --C==C-- double bond. The sequence is that of Epidermin decarboxylase (epiD) from Staphylococcus epidermidis.